A 274-amino-acid polypeptide reads, in one-letter code: Deoxyribonuclease TATDN3 (274 aa).

Positions 12, 14, 107, 147, 170, and 218 each coordinate Zn(2+).

This sequence belongs to the metallo-dependent hydrolases superfamily. TatD-type hydrolase family. The cofactor is Mn(2+). Ca(2+) serves as cofactor. Mg(2+) is required as a cofactor. It depends on Zn(2+) as a cofactor.

Its subcellular location is the nucleus. The 3'-exonuclease activity is sensitive to the metal ion present in the active site, whereas the AP endodeoxyribonuclease activity is observed in a variety of divalent metal cofactors. 3'-exoxonuclease activity is suppressed in the presence of Ca(2+), Zn(2+) and Ni(2+). Functionally, exhibits 3'-exonuclease activities and apurinic/apyrimidinic (AP) endonuclease (in vitro). Show preferential AP endonuclease activity on double-stranded DNA substrates and 3'- exonuclease activity on single-stranded DNA. In Homo sapiens (Human), this protein is Deoxyribonuclease TATDN3 (TATDN3).